The chain runs to 729 residues: Fatty acid oxidation complex subunit alpha (729 aa).

Positions 1–189 (MLYQSETLQL…KIGLVDAVVD (189 aa)) are enoyl-CoA hydratase/isomerase. Asp296 is a substrate binding site. A 3-hydroxyacyl-CoA dehydrogenase region spans residues 311-729 (AAPKLAAVLG…LLDVSTNQPA (419 aa)). NAD(+) is bound by residues Met324, Asp343, 400–402 (VVE), Lys407, and Ser429. His450 serves as the catalytic For 3-hydroxyacyl-CoA dehydrogenase activity. Asn453 lines the NAD(+) pocket. 2 residues coordinate substrate: Asn500 and Tyr660.

It in the N-terminal section; belongs to the enoyl-CoA hydratase/isomerase family. This sequence in the C-terminal section; belongs to the 3-hydroxyacyl-CoA dehydrogenase family. Heterotetramer of two alpha chains (FadB) and two beta chains (FadA).

It carries out the reaction a (3S)-3-hydroxyacyl-CoA + NAD(+) = a 3-oxoacyl-CoA + NADH + H(+). The enzyme catalyses a (3S)-3-hydroxyacyl-CoA = a (2E)-enoyl-CoA + H2O. The catalysed reaction is a 4-saturated-(3S)-3-hydroxyacyl-CoA = a (3E)-enoyl-CoA + H2O. It catalyses the reaction (3S)-3-hydroxybutanoyl-CoA = (3R)-3-hydroxybutanoyl-CoA. It carries out the reaction a (3Z)-enoyl-CoA = a 4-saturated (2E)-enoyl-CoA. The enzyme catalyses a (3E)-enoyl-CoA = a 4-saturated (2E)-enoyl-CoA. The protein operates within lipid metabolism; fatty acid beta-oxidation. Functionally, involved in the aerobic and anaerobic degradation of long-chain fatty acids via beta-oxidation cycle. Catalyzes the formation of 3-oxoacyl-CoA from enoyl-CoA via L-3-hydroxyacyl-CoA. It can also use D-3-hydroxyacyl-CoA and cis-3-enoyl-CoA as substrate. In Yersinia pseudotuberculosis serotype IB (strain PB1/+), this protein is Fatty acid oxidation complex subunit alpha.